The following is a 325-amino-acid chain: Tetraacyldisaccharide 4'-kinase (325 aa).

ATP is bound at residue threonine 55–threonine 62.

Belongs to the LpxK family.

It carries out the reaction a lipid A disaccharide + ATP = a lipid IVA + ADP + H(+). It functions in the pathway glycolipid biosynthesis; lipid IV(A) biosynthesis; lipid IV(A) from (3R)-3-hydroxytetradecanoyl-[acyl-carrier-protein] and UDP-N-acetyl-alpha-D-glucosamine: step 6/6. Transfers the gamma-phosphate of ATP to the 4'-position of a tetraacyldisaccharide 1-phosphate intermediate (termed DS-1-P) to form tetraacyldisaccharide 1,4'-bis-phosphate (lipid IVA). This is Tetraacyldisaccharide 4'-kinase from Salmonella heidelberg (strain SL476).